The primary structure comprises 756 residues: 1,4-alpha-glucan branching enzyme GlgB (756 aa).

D425 acts as the Nucleophile in catalysis. Catalysis depends on E478, which acts as the Proton donor.

The protein belongs to the glycosyl hydrolase 13 family. GlgB subfamily. In terms of assembly, monomer.

It catalyses the reaction Transfers a segment of a (1-&gt;4)-alpha-D-glucan chain to a primary hydroxy group in a similar glucan chain.. It participates in glycan biosynthesis; glycogen biosynthesis. Catalyzes the formation of the alpha-1,6-glucosidic linkages in glycogen by scission of a 1,4-alpha-linked oligosaccharide from growing alpha-1,4-glucan chains and the subsequent attachment of the oligosaccharide to the alpha-1,6 position. The chain is 1,4-alpha-glucan branching enzyme GlgB from Cupriavidus necator (strain ATCC 17699 / DSM 428 / KCTC 22496 / NCIMB 10442 / H16 / Stanier 337) (Ralstonia eutropha).